Here is a 370-residue protein sequence, read N- to C-terminus: Dihydroorotate dehydrogenase (quinone) (370 aa).

FMN is bound by residues 80 to 84 and Thr104; that span reads AGFDK. Lys84 contacts substrate. Residue 129-133 participates in substrate binding; sequence NRMGF. FMN-binding residues include Asn157 and Asn190. Asn190 provides a ligand contact to substrate. Ser193 serves as the catalytic Nucleophile. Asn195 is a binding site for substrate. The FMN site is built by Lys226 and Thr254. 255–256 lines the substrate pocket; that stretch reads NT. FMN contacts are provided by residues Gly278, Gly307, and 328–329; that span reads YT.

It belongs to the dihydroorotate dehydrogenase family. Type 2 subfamily. Monomer. It depends on FMN as a cofactor.

It localises to the cell membrane. It catalyses the reaction (S)-dihydroorotate + a quinone = orotate + a quinol. It participates in pyrimidine metabolism; UMP biosynthesis via de novo pathway; orotate from (S)-dihydroorotate (quinone route): step 1/1. In terms of biological role, catalyzes the conversion of dihydroorotate to orotate with quinone as electron acceptor. The chain is Dihydroorotate dehydrogenase (quinone) from Mycolicibacterium paratuberculosis (strain ATCC BAA-968 / K-10) (Mycobacterium paratuberculosis).